Consider the following 299-residue polypeptide: Cancer/testis antigen family 47 member B1 (299 aa).

Over residues M1–T10 the composition is skewed to basic and acidic residues. Disordered stretches follow at residues M1–E102 and A215–T299. 2 stretches are compositionally biased toward low complexity: residues Q20–G31 and V46–G60. Over residues A81–N101 the composition is skewed to acidic residues. Residues A215 to E238 show a composition bias toward basic and acidic residues. Acidic residues-rich tracts occupy residues E239–S251 and W268–K281. Positions E270–G298 form a coiled coil. Basic and acidic residues predominate over residues E282–V293.

This sequence belongs to the CT47 family.

This Homo sapiens (Human) protein is Cancer/testis antigen family 47 member B1.